Reading from the N-terminus, the 88-residue chain is Pigment dispersing factor homolog pdf-1 (88 aa).

The first 21 residues, 1–21 (MNRFIISMIALLAVFCAVSTA), serve as a signal peptide directing secretion.

The protein localises to the secreted. Functionally, probable ligand of isoforms a and b of the calcitonin receptor-like protein, pdfr-1, a G-protein coupled receptor. May not signal through isoform c of pdfr-1. Involved in locomotion; more specifically mate searching behavior of males, independent of nutritional status. Involved in regulating the male-specific expression of TGFbeta-like daf-7 in the ASJ chemosensory neurons. Plays a role in circadian rhythms of locomotor activity. Involved in mediating arousal from the sleep-like state called lethargus, which occurs during molting between larval and adult stages, in part by regulating touch sensitivity, and working in concert with neuropeptide flp-2. In the presence of food, plays a role in initiating and extending exploratory roaming behavior, in opposition to 5-hydroxytryptamine (serotonin) signaling. The polypeptide is Pigment dispersing factor homolog pdf-1 (Caenorhabditis elegans).